The following is an 802-amino-acid chain: Valine--tRNA ligase (802 aa).

A 'HIGH' region motif is present at residues 45 to 55 (PTISGQLHIGH). Positions 524 to 528 (KMSKS) match the 'KMSKS' region motif. K527 is an ATP binding site.

The protein belongs to the class-I aminoacyl-tRNA synthetase family. ValS type 2 subfamily. In terms of assembly, monomer.

Its subcellular location is the cytoplasm. It carries out the reaction tRNA(Val) + L-valine + ATP = L-valyl-tRNA(Val) + AMP + diphosphate. Its function is as follows. Catalyzes the attachment of valine to tRNA(Val). As ValRS can inadvertently accommodate and process structurally similar amino acids such as threonine, to avoid such errors, it has a 'posttransfer' editing activity that hydrolyzes mischarged Thr-tRNA(Val) in a tRNA-dependent manner. The protein is Valine--tRNA ligase of Ehrlichia canis (strain Jake).